We begin with the raw amino-acid sequence, 228 residues long: ATP-dependent dethiobiotin synthetase BioD (228 aa).

An ATP-binding site is contributed by 12 to 17 (EIGKTT). Threonine 16 is a binding site for Mg(2+). Lysine 37 is a catalytic residue. Serine 41 contacts substrate. ATP-binding positions include aspartate 54, 116-119 (EGAG), and 205-207 (PRL). Aspartate 54 and glutamate 116 together coordinate Mg(2+).

Belongs to the dethiobiotin synthetase family. As to quaternary structure, homodimer. Requires Mg(2+) as cofactor.

It localises to the cytoplasm. It carries out the reaction (7R,8S)-7,8-diammoniononanoate + CO2 + ATP = (4R,5S)-dethiobiotin + ADP + phosphate + 3 H(+). Its pathway is cofactor biosynthesis; biotin biosynthesis; biotin from 7,8-diaminononanoate: step 1/2. Its function is as follows. Catalyzes a mechanistically unusual reaction, the ATP-dependent insertion of CO2 between the N7 and N8 nitrogen atoms of 7,8-diaminopelargonic acid (DAPA, also called 7,8-diammoniononanoate) to form a ureido ring. The protein is ATP-dependent dethiobiotin synthetase BioD of Pseudomonas aeruginosa (strain LESB58).